Here is a 1364-residue protein sequence, read N- to C-terminus: MTEQQPDKEKRLGITWHDLTVKGIGKDAAFHENVASQFNIPSRVKESRAKPLLKTIVDNSHGCVKPGEMLLVLGRPGAGCTSLLKVLANRRLGYTKVTGEVWYGSMTADEAKQYRGQIVMNTEEELFFPTLTVQQTIDFATRMKVPHHLPTNLTNPEEFQKTNRDFLLRAMGIEHTGDTRVGNEFVRGVSGGERKRVSIIETMATRGSVFCWDNSTRGLDASTALEYVRCMRSMTDVLGLSSIVTLYQAGNGIYDLFDKVLVLDEGKQTFYGPMHQAKPFMEEMGFLYTDGANIADYLTSVTVPTERQVRPDMENRFPRNANELRSHYEKTQLKRTMALEYNYPNSPQAAEATKEFKEAVHLEKHPGLPAGSPLTVSFYTQVKSAIIRQYQLLWSDKATFLIPQCLNFVQALISGSLFYNAPHDSSGLAFKSGSLFFAVLLNALLSMSEVTGSFAARPVLAKHRGFALYHPAAYCFAQIAADIPLIAMQVTLFALPVYWMTGLKPTGEAFLTYWIITISVTMCMTALFRAIGAAFSSFDAAIKVTGFLMSALIMYTGFLIPKSRMHPWLGWIFWINPLAYGYEAVLSNEFHGQLIPCVNNNLVPNGPGYNNSEFQACAGIRGAPMGASVITGDQYLQGLSYSHAHVWRNFAIVWVWWALFVILTVYFTSNWSQVSGNSGYLVVPREKANKTMHTAVDEEVGSGPDSHDSRNRSGISPIGDKQETSTDGPSKIDSQLIRNTSVFTWKGLTYTVKTPSGDRVLLDHVQGWVKPGMLGALMGSSGAGKTTLLDVLAQRKTEGIIKGSILVDGRDLPVSFQRSAGYCEQLDVHEPLATVREALEFSALLRQSRDTSVENKLKYVDTIIDLLEMHDIENTLIGTTAAGLSVEQRKRLTIGVELVSKPSILIFLDEPTSGLDGQAAFNIVRFLRKLADVGQAVLVTIHQPSASLFAQFDTLLLLAKGGKTVYFGNVGVNGATVNEYFGRNGAPCPQNTNPAEHMIDVVSGSKDWNEVWLASPEYTAMTQELDHLIRDAASKPPATLDDGHEFATPIWTQLKLVTHRNNTSLWRNTNYINNKLMLHITSGLLNGFSFWKIGNTVADLQMHLFTIFNFIFVAPGVIAQLQPLFLERRDIYEAREKKSKMYHWSAFATGLIVSELPYLVVCAVVYYMTWYYTVGFPSGSDKAGAVFFVVLMYEFIYTGIGQAIAAYTPNAIFAVLINPLIIAILVFFCGVYVPYAQIQAVWRYWLYYLDPFNYLMGSLLIFTTFDAPVHCEKEEFAVFNTPDGQTCGEYLAEYMQGLGSRTNLVNPSATRDCKVCQFRTGGDYLYTLNLKDYYYGWRDAGIVALFAISSYAKLRTKASKKAES.

In terms of domain architecture, ABC transporter 1 spans 42–290 (SRVKESRAKP…MEEMGFLYTD (249 aa)). 2 N-linked (GlcNAc...) asparagine glycosylation sites follow: Asn152 and Asn214. 5 helical membrane-spanning segments follow: residues 435 to 455 (LFFA…GSFA), 483 to 503 (IPLI…MTGL), 508 to 528 (EAFL…TALF), 540 to 560 (AAIK…GFLI), and 567 to 587 (PWLG…AVLS). Residue Asn610 is glycosylated (N-linked (GlcNAc...) asparagine). The helical transmembrane segment at 650-670 (FAIVWVWWALFVILTVYFTSN) threads the bilayer. N-linked (GlcNAc...) asparagine glycosylation is found at Asn689, Asn711, and Asn739. The interval 697 to 732 (DEEVGSGPDSHDSRNRSGISPIGDKQETSTDGPSKI) is disordered. Residues 737–985 (IRNTSVFTWK…TVNEYFGRNG (249 aa)) form the ABC transporter 2 domain. ATP is bound at residue 779–786 (GSSGAGKT). Helical transmembrane passes span 1076–1094 (LMLH…WKIG), 1105–1125 (FTIF…QPLF), 1146–1166 (AFAT…AVVY), 1185–1205 (AVFF…QAIA), 1211–1231 (AIFA…FCGV), and 1245–1265 (WLYY…FTTF).

The protein belongs to the ABC transporter superfamily. ABCG family. PDR (TC 3.A.1.205) subfamily.

The protein localises to the cell membrane. Its function is as follows. ABC-type transporter; part of the gene cluster that mediates the biosynthesis of cordycepin (COR) and pentostatin (PTN), two adenosine analogs with related bioactivity profiles as both mimic adenosine and can inhibit some of the processes that are adenosine dependent. Mediates the pumping of pentostatin but not of cordycepin out of fungal cells. Decreasing intracellular pentostatin releases adenosine deaminase (ADA) inhibition, allowing ADA to deaminate cordycepin into non-toxic 3'-d. In Cordyceps militaris (strain CM01) (Caterpillar fungus), this protein is ABC-type transporter cns4.